We begin with the raw amino-acid sequence, 383 residues long: E3 ubiquitin-protein ligase KCMF1 (383 aa).

The segment at 4–60 (HEGVSCDACLKGNFRGRRYKCLICYDYDLCASCYESGATTTRHTTEHPMQCILTRVD) adopts a ZZ-type zinc-finger fold. Zn(2+)-binding residues include cysteine 9, cysteine 12, cysteine 24, cysteine 27, cysteine 33, cysteine 36, histidine 46, and histidine 50. Residues 78–101 (FTCPYCGKMGYTETSLQEHVTSEH) form a C2H2-type zinc finger. Disordered stretches follow at residues 141 to 194 (DLDE…PSNR) and 242 to 289 (AQAA…LASH). 2 stretches are compositionally biased toward low complexity: residues 175–192 (SSST…YSPS) and 260–279 (SNPS…TNTA). The stretch at 224–261 (SASQLQQLQMQLQLERQQAQAARQQLETARNATRQRSN) forms a coiled coil. The segment covering 280 to 289 (MTESNPLASH) has biased composition (polar residues).

It belongs to the KCMF1 family. As to quaternary structure, component of the SIFI complex, composed of kcmf1, ubr4 and calmodulin.

The protein resides in the cytoplasm. It localises to the late endosome. It is found in the lysosome. The catalysed reaction is S-ubiquitinyl-[E2 ubiquitin-conjugating enzyme]-L-cysteine + [acceptor protein]-L-lysine = [E2 ubiquitin-conjugating enzyme]-L-cysteine + N(6)-ubiquitinyl-[acceptor protein]-L-lysine.. It functions in the pathway protein modification; protein ubiquitination. Its function is as follows. E3 ubiquitin-protein ligase which accepts ubiquitin from an E2 ubiquitin-conjugating enzyme and then transfers it to targeted substrates, promoting their degradation by the proteasome. Together with UBR4, component of the N-end rule pathway: ubiquitinates proteins bearing specific N-terminal residues that are destabilizing according to the N-end rule, leading to their degradation. Does not ubiquitinate proteins that are acetylated at the N-terminus. Together with ubr4, part of a protein quality control pathway that catalyzes ubiquitination and degradation of proteins that have been oxidized in response to reactive oxygen species (ROS): recognizes proteins with an Arg-CysO3(H) degron at the N-terminus, and mediates assembly of heterotypic 'Lys-63'-/'Lys-27'-linked branched ubiquitin chains on oxidized proteins, leading to their degradation by autophagy. Catalytic component of the SIFI complex, a multiprotein complex required to inhibit the mitochondrial stress response after a specific stress event has been resolved: ubiquitinates and degrades (1) components of the HRI-mediated signaling of the integrated stress response, such as dele1 and eif2ak1/hri, as well as (2) unimported mitochondrial precursors. Within the SIFI complex, ubr4 initiates ubiquitin chain that are further elongated or branched by kcmf1. This is E3 ubiquitin-protein ligase KCMF1 (kcmf1) from Danio rerio (Zebrafish).